The primary structure comprises 146 residues: Shadow of prion protein (146 aa).

Positions 1-24 (MRGTSAVCWSLLLLIALLSQNVTA) are cleaved as a signal peptide. N-linked (GlcNAc...) asparagine glycosylation is present at asparagine 94. The GPI-anchor amidated serine moiety is linked to residue serine 108. Residues 109 to 146 (GTCPLSSHLSFRLIISIGAILTCSSSSIYVSTKINLGK) constitute a propeptide, removed in mature form.

Belongs to the SPRN family.

Its subcellular location is the cell membrane. Functionally, prion-like protein that has PrP(C)-like neuroprotective activity. This chain is Shadow of prion protein (sprn), found in Xenopus tropicalis (Western clawed frog).